Here is a 196-residue protein sequence, read N- to C-terminus: MANGPNYKIKHRRRREGKTNYYKRYVYVISKQIRFIVRITNKYVIVQIAKIDPKGDIMVASAHSSELTKKFEWKGDENNTPSAYLTGYLAALRAVKKGVTECVADIGLHVPSKGNKVFYAIKGAIDAGLKIPIGDISIENDRIKGEHIAKYAEKLKSENLDLYNKLFSRYLGRGLNPENLPSHFEEILNKIKSSGG.

The protein belongs to the universal ribosomal protein uL18 family. In terms of assembly, part of the 50S ribosomal subunit. Contacts the 5S and 23S rRNAs.

This is one of the proteins that bind and probably mediate the attachment of the 5S RNA into the large ribosomal subunit, where it forms part of the central protuberance. The sequence is that of Large ribosomal subunit protein uL18 from Saccharolobus islandicus (strain Y.N.15.51 / Yellowstone #2) (Sulfolobus islandicus).